A 937-amino-acid polypeptide reads, in one-letter code: Proprotein convertase subtilisin/kexin type 6 (937 aa).

Pro residues predominate over residues 1–16 (MPPRAPPAPGPRPPPR). Residues 1 to 22 (MPPRAPPAPGPRPPPRAAGRHG) are disordered. Positions 1–45 (MPPRAPPAPGPRPPPRAAGRHGLSPLAPRPWRWLLLLALPAVCSA) are cleaved as a signal peptide. A propeptide spanning residues 46–132 (LPPPRPVYTN…QQEVKRRVKR (87 aa)) is cleaved from the precursor. The Peptidase S8 domain occupies 149 to 468 (MWYMHCADKN…FGLVDAEALV (320 aa)). Residues Asp-186 and His-227 each act as charge relay system in the active site. A glycan (N-linked (GlcNAc...) asparagine) is linked at Asn-240. Ser-401 functions as the Charge relay system in the catalytic mechanism. The region spanning 476–616 (AVPSQHMCVA…SLILYGTAEH (141 aa)) is the P/Homo B domain. The short motif at 534–536 (RGD) is the Cell attachment site element. Residues 621-656 (FSSHQSRSRMLELSVPEQEPLKAEGPPPQAETPEEE) are disordered. FU repeat units lie at residues 660–707 (TGVC…GYFG), 711–758 (ARRC…GLYA), 762–806 (QRLC…GTYF), 810–855 (LIRC…GFYP), and 863–911 (HKVC…ETFC). Residues 680–898 (CLNCVHFSLG…GFTQLGTSCI (219 aa)) are CRM (Cys-rich motif). N-linked (GlcNAc...) asparagine glycosylation is found at Asn-882 and Asn-900. The region spanning 899-937 (TNHTCSNADETFCEMVKSNRLCERKLFIQFCCRTCLLAG) is the PLAC domain.

The protein belongs to the peptidase S8 family. In terms of assembly, the precursor protein seems to exist in the reticulum endoplasmic as both a monomer and a dimer-sized complex whereas mature form exists only as a monomer, suggesting that propeptide cleavage affects its tertiary or quaternary structure. Interacts (immature form including the propeptide) with RCN3; probably involved in the maturation and the secretion of PCSK6. Requires Ca(2+) as cofactor. In terms of tissue distribution, high expression in the anterior pituitary and in several brain regions, the atrium, and the ventricle.

In terms of biological role, serine endoprotease that processes various proproteins by cleavage at paired basic amino acids, recognizing the RXXX[KR]R consensus motif. Likely functions in the constitutive secretory pathway, with unique restricted distribution in both neuroendocrine and non-neuroendocrine tissues. This chain is Proprotein convertase subtilisin/kexin type 6 (Pcsk6), found in Rattus norvegicus (Rat).